A 332-amino-acid chain; its full sequence is Tryptophan--tRNA ligase (332 aa).

ATP is bound by residues 11 to 13 (TST) and 19 to 20 (GN). A 'HIGH' region motif is present at residues 12–20 (STGKLTLGN). Asp-140 contacts L-tryptophan. ATP contacts are provided by residues 152 to 154 (GQD), Ile-191, and 200 to 204 (KMSKS). Residues 200–204 (KMSKS) carry the 'KMSKS' region motif.

It belongs to the class-I aminoacyl-tRNA synthetase family. In terms of assembly, homodimer.

It localises to the cytoplasm. The enzyme catalyses tRNA(Trp) + L-tryptophan + ATP = L-tryptophyl-tRNA(Trp) + AMP + diphosphate + H(+). In terms of biological role, catalyzes the attachment of tryptophan to tRNA(Trp). The polypeptide is Tryptophan--tRNA ligase (Mycoplasmopsis pulmonis (strain UAB CTIP) (Mycoplasma pulmonis)).